The sequence spans 342 residues: tRNA N6-adenosine threonylcarbamoyltransferase (342 aa).

H111 and H115 together coordinate Fe cation. Residues 134–138 (LVSGG), D167, G180, D184, and N273 contribute to the substrate site. D298 lines the Fe cation pocket.

This sequence belongs to the KAE1 / TsaD family. Fe(2+) is required as a cofactor.

It localises to the cytoplasm. It carries out the reaction L-threonylcarbamoyladenylate + adenosine(37) in tRNA = N(6)-L-threonylcarbamoyladenosine(37) in tRNA + AMP + H(+). Its function is as follows. Required for the formation of a threonylcarbamoyl group on adenosine at position 37 (t(6)A37) in tRNAs that read codons beginning with adenine. Is involved in the transfer of the threonylcarbamoyl moiety of threonylcarbamoyl-AMP (TC-AMP) to the N6 group of A37, together with TsaE and TsaB. TsaD likely plays a direct catalytic role in this reaction. This is tRNA N6-adenosine threonylcarbamoyltransferase from Gloeobacter violaceus (strain ATCC 29082 / PCC 7421).